We begin with the raw amino-acid sequence, 3232 residues long: D-lysergyl-peptide-synthetase subunit 1 (3232 aa).

Residues 90–474 (GCLTYDEMSI…LGRKDDQVKI (385 aa)) are adenylation (A) domain 1. The Carrier 1 domain occupies 617 to 686 (REKLLQGCFA…TLREIVIVST (70 aa)). Serine 649 carries the post-translational modification O-(pantetheine 4'-phosphoryl)serine. A condensation (C) domain 1 region spans residues 731–1122 (EDIYPCTHLQ…EHILTQIHSN (392 aa)). An adenylation (A) domain 2 region spans residues 1165–1572 (QAKCQAQPDA…RRKDAQVKIR (408 aa)). The Carrier 2 domain maps to 1717–1785 (TEHEISAIWA…TIRKLALARG (69 aa)). Serine 1749 carries the post-translational modification O-(pantetheine 4'-phosphoryl)serine. The condensation (C) domain 2 stretch occupies residues 1835 to 2252 (ERIYPCSPIQ…ALPVLDEDQM (418 aa)). Residues 2276 to 2675 (QQCLRCPDSP…GRNDDQVKVR (400 aa)) form an adenylation (A) domain 3 region. The Carrier 3 domain occupies 2810 to 2878 (MEAELQRLVG…RVSDLARIVE (69 aa)). At serine 2842 the chain carries O-(pantetheine 4'-phosphoryl)serine. The segment at 2943–3218 (LYFSKPVASE…LLHWLHQQHI (276 aa)) is cyclization (Cyc) domain.

It belongs to the NRP synthetase family.

The protein operates within alkaloid biosynthesis; ergot alkaloid biosynthesis. In terms of biological role, D-lysergyl-peptide-synthetase subunit 1; part of the gene cluster that mediates the biosynthesis of fungal ergot alkaloid. DmaW catalyzes the first step of ergot alkaloid biosynthesis by condensing dimethylallyl diphosphate (DMAP) and tryptophan to form 4-dimethylallyl-L-tryptophan. The second step is catalyzed by the methyltransferase easF that methylates 4-dimethylallyl-L-tryptophan in the presence of S-adenosyl-L-methionine, resulting in the formation of 4-dimethylallyl-L-abrine. The catalase easC and the FAD-dependent oxidoreductase easE then transform 4-dimethylallyl-L-abrine to chanoclavine-I which is further oxidized by easD in the presence of NAD(+), resulting in the formation of chanoclavine-I aldehyde. Agroclavine dehydrogenase easG then mediates the conversion of chanoclavine-I aldehyde to agroclavine via a non-enzymatic adduct reaction: the substrate is an iminium intermediate that is formed spontaneously from chanoclavine-I aldehyde in the presence of glutathione. The presence of easA is not required to complete this reaction. Further conversion of agroclavine to paspalic acid is a two-step process involving oxidation of agroclavine to elymoclavine and of elymoclavine to paspalic acid, the second step being performed by the elymoclavine oxidase cloA. Paspalic acid is then further converted to D-lysergic acid. Ergopeptines are assembled from D-lysergic acid and three different amino acids by the D-lysergyl-peptide-synthetases composed each of a monomudular and a trimodular nonribosomal peptide synthetase subunit. LpsB and lpsC encode the monomodular subunits responsible for D-lysergic acid activation and incorporation into the ergopeptine backbone. LpsA1 and A2 subunits encode the trimodular nonribosomal peptide synthetase assembling the tripeptide portion of ergopeptines. LpsA1 is responsible for formation of the major ergopeptine, ergotamine, and lpsA2 for alpha-ergocryptine, the minor ergopeptine of the total alkaloid mixture elaborated by C.purpurea. D-lysergyl-tripeptides are assembled by the nonribosomal peptide synthetases and released as N-(D-lysergyl-aminoacyl)-lactams. Cyclolization of the D-lysergyl-tripeptides is performed by the Fe(2+)/2-ketoglutarate-dependent dioxygenase easH which introduces a hydroxyl group into N-(D-lysergyl-aminoacyl)-lactam at alpha-C of the aminoacyl residue followed by spontaneous condensation with the terminal lactam carbonyl group. In Claviceps purpurea (Ergot fungus), this protein is D-lysergyl-peptide-synthetase subunit 1.